The chain runs to 193 residues: Potassium-transporting ATPase KdpC subunit (193 aa).

Residues 14–34 (ITFTFLVLCGLVYPLIVTGIA) traverse the membrane as a helical segment.

The protein belongs to the KdpC family. As to quaternary structure, the system is composed of three essential subunits: KdpA, KdpB and KdpC.

Its subcellular location is the cell membrane. Part of the high-affinity ATP-driven potassium transport (or Kdp) system, which catalyzes the hydrolysis of ATP coupled with the electrogenic transport of potassium into the cytoplasm. This subunit acts as a catalytic chaperone that increases the ATP-binding affinity of the ATP-hydrolyzing subunit KdpB by the formation of a transient KdpB/KdpC/ATP ternary complex. This Bacillus cereus (strain B4264) protein is Potassium-transporting ATPase KdpC subunit.